Here is a 363-residue protein sequence, read N- to C-terminus: Zinc finger CCCH domain-containing protein 53 (363 aa).

The C3H1-type zinc finger occupies 154 to 181; that stretch reads KNRPKICSFYTIGQCKRGAECSFRHEMP. The 86-residue stretch at 225-310 folds into the RRM domain; the sequence is KTLYVGGLNS…PPNEYSHYPS (86 aa). Positions 281–348 are disordered; sequence LISQQQNQHS…SYSYPMPPHQ (68 aa). Low complexity predominate over residues 283 to 297; sequence SQQQNQHSQMQQYYM. The span at 320–336 shows a compositional bias: polar residues; sequence FSTQESDGSSTSENNRA.

This is Zinc finger CCCH domain-containing protein 53 from Arabidopsis thaliana (Mouse-ear cress).